Here is a 391-residue protein sequence, read N- to C-terminus: Phosphoglycerate kinase (391 aa).

Substrate is bound by residues 21–23 (DLN), arginine 36, 59–62 (HLGR), arginine 113, and arginine 146. ATP-binding positions include lysine 197, glutamate 319, and 345–348 (GGDT).

The protein belongs to the phosphoglycerate kinase family. As to quaternary structure, monomer.

The protein resides in the cytoplasm. It carries out the reaction (2R)-3-phosphoglycerate + ATP = (2R)-3-phospho-glyceroyl phosphate + ADP. It participates in carbohydrate degradation; glycolysis; pyruvate from D-glyceraldehyde 3-phosphate: step 2/5. The protein is Phosphoglycerate kinase of Xanthomonas campestris pv. campestris (strain 8004).